Here is a 473-residue protein sequence, read N- to C-terminus: Glycine--tRNA ligase (473 aa).

2 residues coordinate substrate: Arg101 and Glu172. Residues Arg204 to Glu206, Phe214 to Phe219, Glu289 to Leu290, and Gly333 to Arg336 each bind ATP. Phe219–Glu223 contributes to the substrate binding site. Glu329–Gly333 is a substrate binding site.

It belongs to the class-II aminoacyl-tRNA synthetase family. Homodimer.

The protein localises to the cytoplasm. It carries out the reaction tRNA(Gly) + glycine + ATP = glycyl-tRNA(Gly) + AMP + diphosphate. Catalyzes the attachment of glycine to tRNA(Gly). The protein is Glycine--tRNA ligase of Ureaplasma parvum serovar 3 (strain ATCC 27815 / 27 / NCTC 11736).